The sequence spans 182 residues: ATP-dependent protease subunit HslV (182 aa).

The active site involves Thr-7. 3 residues coordinate Na(+): Ala-166, Cys-169, and Thr-172.

Belongs to the peptidase T1B family. HslV subfamily. As to quaternary structure, a double ring-shaped homohexamer of HslV is capped on each side by a ring-shaped HslU homohexamer. The assembly of the HslU/HslV complex is dependent on binding of ATP.

The protein resides in the cytoplasm. It carries out the reaction ATP-dependent cleavage of peptide bonds with broad specificity.. Its activity is regulated as follows. Allosterically activated by HslU binding. In terms of biological role, protease subunit of a proteasome-like degradation complex believed to be a general protein degrading machinery. In Albidiferax ferrireducens (strain ATCC BAA-621 / DSM 15236 / T118) (Rhodoferax ferrireducens), this protein is ATP-dependent protease subunit HslV.